A 288-amino-acid chain; its full sequence is Nickel/cobalt efflux system RcnA (288 aa).

Over 1–12 the chain is Periplasmic; sequence MGEFSTLLQQGN. The chain crosses the membrane as a helical span at residues 13–33; the sequence is AWFFIPSAILLGVLHGLEPGH. At 34-51 the chain is on the cytoplasmic side; it reads SKTMMAAFIIAIKGTIKQ. Residues 52-72 traverse the membrane as a helical segment; that stretch reads AVMLGLAATLSHTAVVWLIAL. The Periplasmic segment spans residues 73 to 85; that stretch reads GGMYVSRAFTAES. The helical transmembrane segment at 86–106 threads the bilayer; the sequence is VEPWLQLVSAIIILSTAFWMF. Residues 107–188 lie on the Cytoplasmic side of the membrane; sequence WRTWKGERDG…FHDREVTNGQ (82 aa). Positions 125–137 are enriched in basic residues; the sequence is THHHHDHEHHHHD. The interval 125–144 is disordered; it reads THHHHDHEHHHHDHDHDHHH. Residues 189-209 traverse the membrane as a helical segment; that stretch reads ILLFGLTGGLIPCPAAITVLL. At 210-223 the chain is on the periplasmic side; the sequence is ICIQLKAFTLGATM. Residues 224-244 form a helical membrane-spanning segment; sequence VLCFSIGLALTLVAVGVGAAI. Residues 245-266 lie on the Cytoplasmic side of the membrane; it reads SVQQAAKRWSGFNTLARKAPYF. A helical membrane pass occupies residues 267 to 287; the sequence is SSILIGLVGLYMGMHGYLGII. Position 288 (Arg-288) is a topological domain, periplasmic.

Belongs to the NiCoT transporter (TC 2.A.52) family. RcnA subfamily.

It is found in the cell inner membrane. Functionally, efflux system for nickel and cobalt. The sequence is that of Nickel/cobalt efflux system RcnA (rcnA) from Citrobacter koseri (strain ATCC BAA-895 / CDC 4225-83 / SGSC4696).